A 104-amino-acid polypeptide reads, in one-letter code: Hydrogen cyanide synthase subunit HcnA (104 aa).

One can recognise a 2Fe-2S ferredoxin-type domain in the interval 16–97 (ADMTIHLNGQ…GMRVETESNR (82 aa)). [2Fe-2S] cluster is bound by residues cysteine 60, cysteine 65, cysteine 68, and cysteine 81.

In terms of assembly, heterotrimer of HcnA, HcnB and HcnC.

Its subcellular location is the cell membrane. The enzyme catalyses glycine + 2 A = hydrogen cyanide + 2 AH2 + CO2. Its activity is regulated as follows. Oxygen is necessary for cyanogenesis. Activated by succinate, glycine methyl ester, glucose and D,L-methionine in addition to glycine. Phenazine methosulfate, methylene blue, 2,6-dichlorophenolindophenol (DCIP) and ferricyanide can replace oxygen for the reaction. Inhibited by pyrrolnitrin and acriflavine at 1 mM concentration. A three-component membrane-bound flavoenzyme that catalyzes the formation of hydrogen cyanide, a secondary metabolite, by transfer of electrons to a cyanide-resistant branch of the aerobic respiratory chain. This chain is Hydrogen cyanide synthase subunit HcnA, found in Pseudomonas aeruginosa (strain ATCC 15692 / DSM 22644 / CIP 104116 / JCM 14847 / LMG 12228 / 1C / PRS 101 / PAO1).